Reading from the N-terminus, the 226-residue chain is Uridylate kinase (226 aa).

An ATP-binding site is contributed by lysine 6 to lysine 10. Residue glycine 43 coordinates UMP. ATP is bound by residues glycine 44 and arginine 48. Residues aspartate 65 and phenylalanine 113–threonine 119 contribute to the UMP site. ATP-binding residues include threonine 139, asparagine 140, tyrosine 145, and aspartate 148.

The protein belongs to the UMP kinase family. As to quaternary structure, homohexamer.

It localises to the cytoplasm. The enzyme catalyses UMP + ATP = UDP + ADP. It participates in pyrimidine metabolism; CTP biosynthesis via de novo pathway; UDP from UMP (UMPK route): step 1/1. With respect to regulation, inhibited by UTP. Its function is as follows. Catalyzes the reversible phosphorylation of UMP to UDP. This Saccharolobus islandicus (strain Y.N.15.51 / Yellowstone #2) (Sulfolobus islandicus) protein is Uridylate kinase.